We begin with the raw amino-acid sequence, 447 residues long: MTKKIITLVGRPNVGKSTLFNRLSIRKKAIVHDLPGVTRDRKYTEGKIGSFEFLLIDTPGLEENPDSMGERLIEQTTKAILEADLICFMVDGRSGILPDDKLLGSFVRKYNKPAILIVNKCEKAFDFDKEYYKLGFDSMVAISAEHGTGLIDLYDEIIAKLPEEESIETNIADPIKRDCLQIVVSGRPNAGKSTFINALINDERLLTGPEAGITRESIEIDWQYKNNHIKLIDTAGLRKKSTITESLEKLSASDAINSIKFANTVILMIDALAPLKQQDLNIASHVVNEGRSIVIVVNKWDLVKESEKEAFQEEFYYQINTHLPQVKGVPVLFISAINKQNIEQVLDACLKIYKIWNKKITTSKLNEWLNFTTEAHPLPLQKGGKRVRVKYMTQTKTRPPTFKLFSNNPEKITDSYTRYLVNNMREAFDMPGIPIRFTYVKTKNPYV.

2 EngA-type G domains span residues 4–165 and 180–357; these read KIIT…PEEE and LQIV…KIWN. GTP contacts are provided by residues 10–17, 57–61, 119–122, 186–193, 233–237, and 298–301; these read GRPNVGKS, DTPGL, NKCE, GRPNAGKS, DTAGL, and NKWD. The KH-like domain occupies 358-443; sequence KKITTSKLNE…PIRFTYVKTK (86 aa).

Belongs to the TRAFAC class TrmE-Era-EngA-EngB-Septin-like GTPase superfamily. EngA (Der) GTPase family. As to quaternary structure, associates with the 50S ribosomal subunit.

In terms of biological role, GTPase that plays an essential role in the late steps of ribosome biogenesis. This Rickettsia felis (strain ATCC VR-1525 / URRWXCal2) (Rickettsia azadi) protein is GTPase Der.